The primary structure comprises 426 residues: Glutamate-1-semialdehyde 2,1-aminomutase (426 aa).

Position 265 is an N6-(pyridoxal phosphate)lysine (Lys-265).

Belongs to the class-III pyridoxal-phosphate-dependent aminotransferase family. HemL subfamily. In terms of assembly, homodimer. Requires pyridoxal 5'-phosphate as cofactor.

It localises to the cytoplasm. It carries out the reaction (S)-4-amino-5-oxopentanoate = 5-aminolevulinate. It functions in the pathway porphyrin-containing compound metabolism; protoporphyrin-IX biosynthesis; 5-aminolevulinate from L-glutamyl-tRNA(Glu): step 2/2. In Salmonella gallinarum (strain 287/91 / NCTC 13346), this protein is Glutamate-1-semialdehyde 2,1-aminomutase.